The following is a 217-amino-acid chain: UPF0502 protein Sfri_1696 (217 aa).

Belongs to the UPF0502 family.

This chain is UPF0502 protein Sfri_1696, found in Shewanella frigidimarina (strain NCIMB 400).